Reading from the N-terminus, the 525-residue chain is MPCACNRSNWRRWIRPLLVLFYATTILVAVPICIWKFQKMKVGMHTKSWFIAGIFLLLTIPVSLWGILQHLVHYTQPELQKPIIRILWMVPIYSVDSWVALVYPKIAIYVDTWRECYEAYVIYNFMIFLTNYLTIRFPNLILHLEAKDQQNHILPLCCCPPWAMGEMLLFRCKLGVLQYTVVRPITTVTALVCEILDVYDEGNFGFSNAWTYLVILNNLSQLFAMYCLLLFYKVLKEELSPIQPVGKFLCVKLVVFVSFWQAVLIALLVKLGVISEKRTWEWQSAEAVATGLQDFIICIEMFFAAIAHHYTFSYKPYVHEAEEGSCFDSFLAMWDVSDIRDDISEQVRRVGRTMRGYPKKKCFPGDPDHNEHSSLLSSSSQDLTSGSSKVPSPGGLYQGFGHTISSQSPISIASIYEEIMNDIPEEQQKLLNPGQDVTINIPEEQQKLIDKRKDVMIDIPEQNAIPDNSQYQDQEQIVTLQALFPSTETSENSMIDTSESQQESSDLCTESSDSSTESSDLSTDP.

7 helical membrane-spanning segments follow: residues 17–37, 48–68, 83–103, 121–141, 212–232, 254–274, and 287–307; these read LLVL…IWKF, SWFI…WGIL, IIRI…ALVY, VIYN…PNLI, YLVI…LLFY, VVFV…LGVI, and AVAT…AAIA. Disordered stretches follow at residues 358 to 394 and 483 to 525; these read PKKK…PSPG and LFPS…STDP. The span at 373-388 shows a compositional bias: low complexity; that stretch reads SSLLSSSSQDLTSGSS. Positions 483–502 are enriched in polar residues; it reads LFPSTETSENSMIDTSESQQ. Residues 503 to 525 are compositionally biased toward low complexity; that stretch reads ESSDLCTESSDSSTESSDLSTDP.

The protein belongs to the TMEM184 family.

It localises to the membrane. In terms of biological role, possible tumor suppressor which may play a role in cell growth. This chain is Transmembrane protein 184C (Tmem184c), found in Mus musculus (Mouse).